A 255-amino-acid chain; its full sequence is Methylthioribulose-1-phosphate dehydratase (255 aa).

Cysteine 111 provides a ligand contact to substrate. Residues histidine 128 and histidine 130 each contribute to the Zn(2+) site. The Proton donor/acceptor role is filled by glutamate 157. Histidine 213 contacts Zn(2+).

This sequence belongs to the aldolase class II family. MtnB subfamily. It depends on Zn(2+) as a cofactor.

Its subcellular location is the cytoplasm. The enzyme catalyses 5-(methylsulfanyl)-D-ribulose 1-phosphate = 5-methylsulfanyl-2,3-dioxopentyl phosphate + H2O. The protein operates within amino-acid biosynthesis; L-methionine biosynthesis via salvage pathway; L-methionine from S-methyl-5-thio-alpha-D-ribose 1-phosphate: step 2/6. In terms of biological role, catalyzes the dehydration of methylthioribulose-1-phosphate (MTRu-1-P) into 2,3-diketo-5-methylthiopentyl-1-phosphate (DK-MTP-1-P). This chain is Methylthioribulose-1-phosphate dehydratase, found in Talaromyces stipitatus (strain ATCC 10500 / CBS 375.48 / QM 6759 / NRRL 1006) (Penicillium stipitatum).